The primary structure comprises 463 residues: 23S rRNA (uracil(1939)-C(5))-methyltransferase RlmD (463 aa).

In terms of domain architecture, TRAM spans 6–76 (KSRKPQQPEY…KRLEEAEMVE (71 aa)). Residues Cys90, Cys96, Cys99, and Cys178 each contribute to the [4Fe-4S] cluster site. Residues Gln288, Phe317, Asn322, Glu341, Asp368, and Asp389 each contribute to the S-adenosyl-L-methionine site. The Nucleophile role is filled by Cys415.

Belongs to the class I-like SAM-binding methyltransferase superfamily. RNA M5U methyltransferase family. RlmD subfamily.

The enzyme catalyses uridine(1939) in 23S rRNA + S-adenosyl-L-methionine = 5-methyluridine(1939) in 23S rRNA + S-adenosyl-L-homocysteine + H(+). Its function is as follows. Catalyzes the formation of 5-methyl-uridine at position 1939 (m5U1939) in 23S rRNA. This Acinetobacter baumannii (strain AYE) protein is 23S rRNA (uracil(1939)-C(5))-methyltransferase RlmD.